A 153-amino-acid polypeptide reads, in one-letter code: Small ribosomal subunit protein uS19 (153 aa).

A unknown region spans residues 1 to 63 (MGFRGAWNKR…QEIWDEFRAF (63 aa)). Residues 64–153 (VNKKAWVDPK…EKSAKVVKKK (90 aa)) are small ribosomal subunit protein uS19.

This sequence belongs to the universal ribosomal protein uS19 family.

Its function is as follows. Protein S19 forms a complex with S13 that binds strongly to the 16S ribosomal RNA. This chain is Small ribosomal subunit protein uS19, found in Hydrogenobaculum sp. (strain Y04AAS1).